The chain runs to 463 residues: Movement protein TGB1 (463 aa).

Residues 1–126 are disordered; it reads MESGFNGSRP…RIPEEGGGGL (126 aa). 2 nucleolar localization signal regions span residues 11–16 and 37–52; these read HRVKKD and FRKN…KPRS. Residues 23–49 show a composition bias toward polar residues; the sequence is PVNTQGSSGTTGNAFRKNNNNKTQNWK. The span at 58-67 shows a compositional bias: basic and acidic residues; the sequence is NEGDQTKNNK. A compositionally biased stretch (polar residues) spans 83-95; the sequence is RPESSTGESVKQQ. Positions 96-107 are enriched in basic and acidic residues; it reads SEPHRVLEDKKQ. Positions 185-326 constitute a (+)RNA virus helicase ATP-binding domain; that stretch reads CNLSQRESEV…WLQVPVIFQS (142 aa). Position 215–222 (215–222) interacts with ATP; it reads GVPGSGKT. The region spanning 327–463 is the (+)RNA virus helicase C-terminal domain; the sequence is LTSRRFGKAT…QPQTDRYGPE (137 aa).

This sequence belongs to the virgaviridae/benyvirus TGB1 movement protein family. Homooligomer. TGB1-TGB3-TGB2 complex formation is enhanced by ATP hydrolysis. Interacts with the suppressor of RNA silencing (via N-terminus). Interacts (via N-terminus) with host importin IMPA1. It depends on Mg(2+) as a cofactor.

The protein localises to the host cell junction. It is found in the host plasmodesma. It localises to the host nucleus. The protein resides in the host cytoplasm. Its subcellular location is the host nucleolus. The protein localises to the host cytoskeleton. The catalysed reaction is ATP + H2O = ADP + phosphate + H(+). Functionally, participates in the transport of viral genome to neighboring plant cells directly through plasmodesmata, without any budding. Multifunctional movement protein with RNA-binding, ATPase and helicase activities. Engages in homologous interactions leading to the formation of a ribonucleoprotein complex containing plus-sense viral RNAs (vRNPs). ATPase activity is probably required for vRNPs movement complex assembly. Intracellular delivery of TGBp1-containing vRNPs to plasmodesmata is facilitated by TGBp2 and TGBp3. The polypeptide is Movement protein TGB1 (Potato mop-top virus (isolate Potato/Sweden/Sw) (PMTV)).